Consider the following 307-residue polypeptide: Ornithine carbamoyltransferase (307 aa).

Carbamoyl phosphate contacts are provided by residues 50–53 (STRT), Q77, R101, and 128–131 (HPCQ). L-ornithine is bound by residues N160, D224, and 228 to 229 (SM). Carbamoyl phosphate-binding positions include 264–265 (CL) and R292.

This sequence belongs to the aspartate/ornithine carbamoyltransferase superfamily. OTCase family.

The protein localises to the cytoplasm. The enzyme catalyses carbamoyl phosphate + L-ornithine = L-citrulline + phosphate + H(+). It participates in amino-acid biosynthesis; L-arginine biosynthesis; L-arginine from L-ornithine and carbamoyl phosphate: step 1/3. In terms of biological role, reversibly catalyzes the transfer of the carbamoyl group from carbamoyl phosphate (CP) to the N(epsilon) atom of ornithine (ORN) to produce L-citrulline. This is Ornithine carbamoyltransferase from Clavibacter michiganensis subsp. michiganensis (strain NCPPB 382).